The sequence spans 86 residues: MATVFERVKKVSVEQLGAEEKDVVLTASFADDLGADSLDQVELIMALETEFGTPETKFEIPDTDAEKLKTVQAVVDYLKSKGIKDS.

Positions 2-82 (ATVFERVKKV…AVVDYLKSKG (81 aa)) constitute a Carrier domain. Serine 37 bears the O-(pantetheine 4'-phosphoryl)serine mark.

This sequence belongs to the acyl carrier protein (ACP) family. 4'-phosphopantetheine is transferred from CoA to a specific serine of apo-ACP by AcpS. This modification is essential for activity because fatty acids are bound in thioester linkage to the sulfhydryl of the prosthetic group.

It localises to the cytoplasm. Its pathway is lipid metabolism; fatty acid biosynthesis. Carrier of the growing fatty acid chain in fatty acid biosynthesis. The protein is Acyl carrier protein of Dehalococcoides mccartyi (strain ATCC BAA-2100 / JCM 16839 / KCTC 5957 / BAV1).